The sequence spans 130 residues: Small ribosomal subunit protein uS11 (130 aa).

It belongs to the universal ribosomal protein uS11 family. As to quaternary structure, part of the 30S ribosomal subunit. Interacts with proteins S7 and S18. Binds to IF-3.

Located on the platform of the 30S subunit, it bridges several disparate RNA helices of the 16S rRNA. Forms part of the Shine-Dalgarno cleft in the 70S ribosome. The chain is Small ribosomal subunit protein uS11 from Xylella fastidiosa (strain M12).